We begin with the raw amino-acid sequence, 609 residues long: MTIDNPSAFLKTLPTGSGVYQMQDAQGKVIYVGKARNLQKRVSSYFRRQLDSKTQAMMAQVQSIQTTITRNENEALLLEASFIKQFRPRYNVLLRDDKSYPYLYLATHQKFPRLDFYRGAKKAPGRYFGPYPNAGSVRENLALIQKLFKLRQCSESFFKNRTRPCLQYQIKRCTAPCVGYVNEQEYRRQVEDAILFFEGKNDQVIIKLTERMEVASENLVFEEAAHYRDQIRQLRRLQKQQIITGGKGNIDIIGIAESNGAIGFAILFIRSGRMIGHKPFFPNTPLGTTLQTALVEFIPQYYLSPLRNGDIPERIVTSEPLEDRLWIQRALSSGLNRKLAITDQKRAPYKQWQAMAALNAAQALSQHLAQKNTFALKLEAIQKSLALPNPIARIECFDISHTLGEATVASCVVFGEEGPIKKDYRRFNISGVTPGDDYGALRQVLTRRYVRLKEGEGILPDVLLIDGGMGQLRQAAEVLEELQVSGVILTAIAKGPGRKAGLEKLFVWGRREEIHLPADNIAFHLIQQIRDEAHRFAITAHCNRRAKRRVESTLQEIEGIGPKRRQKLLKYFGGLQELQRASIEEIARVPGVSETLAKAIYDACHQHKG.

One can recognise a GIY-YIG domain in the interval T15–V92. Residues D202 to L237 form the UVR domain.

The protein belongs to the UvrC family. As to quaternary structure, interacts with UvrB in an incision complex.

Its subcellular location is the cytoplasm. Its function is as follows. The UvrABC repair system catalyzes the recognition and processing of DNA lesions. UvrC both incises the 5' and 3' sides of the lesion. The N-terminal half is responsible for the 3' incision and the C-terminal half is responsible for the 5' incision. The polypeptide is UvrABC system protein C (Coxiella burnetii (strain CbuK_Q154) (Coxiella burnetii (strain Q154))).